A 295-amino-acid polypeptide reads, in one-letter code: Ribosomal RNA small subunit methyltransferase A (295 aa).

Residues Asn-31, Leu-33, Gly-58, Glu-79, Asp-104, and Asn-129 each contribute to the S-adenosyl-L-methionine site.

It belongs to the class I-like SAM-binding methyltransferase superfamily. rRNA adenine N(6)-methyltransferase family. RsmA subfamily.

Its subcellular location is the cytoplasm. The enzyme catalyses adenosine(1518)/adenosine(1519) in 16S rRNA + 4 S-adenosyl-L-methionine = N(6)-dimethyladenosine(1518)/N(6)-dimethyladenosine(1519) in 16S rRNA + 4 S-adenosyl-L-homocysteine + 4 H(+). Specifically dimethylates two adjacent adenosines (A1518 and A1519) in the loop of a conserved hairpin near the 3'-end of 16S rRNA in the 30S particle. May play a critical role in biogenesis of 30S subunits. The sequence is that of Ribosomal RNA small subunit methyltransferase A from Enterococcus faecalis (strain ATCC 700802 / V583).